Reading from the N-terminus, the 329-residue chain is Phosphate acyltransferase (329 aa).

It belongs to the PlsX family. In terms of assembly, homodimer. Probably interacts with PlsY.

It is found in the cytoplasm. It carries out the reaction a fatty acyl-[ACP] + phosphate = an acyl phosphate + holo-[ACP]. It participates in lipid metabolism; phospholipid metabolism. In terms of biological role, catalyzes the reversible formation of acyl-phosphate (acyl-PO(4)) from acyl-[acyl-carrier-protein] (acyl-ACP). This enzyme utilizes acyl-ACP as fatty acyl donor, but not acyl-CoA. The polypeptide is Phosphate acyltransferase (Anoxybacillus flavithermus (strain DSM 21510 / WK1)).